Reading from the N-terminus, the 615-residue chain is Peptidoglycan-binding protein YepA (615 aa).

The first 26 residues, 1-26 (MRNLAALLPALFLLGSSLLPAGTALA), serve as a signal peptide directing secretion.

The protein belongs to the bacterial solute-binding protein 5 family. In terms of assembly, the complex is composed of one ATP-binding protein (YejF), two transmembrane proteins (YejB and YejE) and a solute-binding protein (YepA).

It localises to the periplasm. Functionally, part of the ABC transporter complex YejBEF-YepA involved in the uptake of muropeptides, the breakdown products of cell wall peptidoglycan. The import of muropeptides into the cell enables peptidoglycan recycling, which is vital for cell wall integrity in this bacterium. Probably binds muropeptides. The polypeptide is Peptidoglycan-binding protein YepA (Agrobacterium fabrum (strain C58 / ATCC 33970) (Agrobacterium tumefaciens (strain C58))).